The primary structure comprises 262 residues: WW domain-binding protein 2 (262 aa).

Residues 1 to 84 (MALNKNHSEG…YLMKDCEVKQ (84 aa)) form the GRAM domain. Y192 is subject to Phosphotyrosine. A PPxY motif 1 motif is present at residues 196-200 (PPPPY). The span at 197 to 206 (PPPYPGPMEP) shows a compositional bias: pro residues. The tract at residues 197-262 (PPPYPGPMEP…YYPPEDKKTQ (66 aa)) is disordered. Over residues 219–231 (AAEAKAAEAAASA) the composition is skewed to low complexity. The residue at position 232 (Y232) is a Phosphotyrosine. Residues 246-255 (SQPPPPPYYP) are compositionally biased toward pro residues. The PPxY motif 2 signature appears at 249–253 (PPPPY).

Binds to the WW domain of YAP1, WWP1 and WWP2. Interacts with NEDD4. Interacts with ESR1 and UBE3A. Phosphorylated in repsonse to EGF as well as estrogen and progesterone hormones. Tyr-192 and Tyr-232 are phosphorylated by YES and SRC inducing nuclear translocation.

The protein localises to the cytoplasm. It localises to the nucleus. Its function is as follows. Acts as a transcriptional coactivator of estrogen and progesterone receptors (ESR1 and PGR) upon hormone activation. In presence of estrogen, binds to ESR1-responsive promoters. Synergizes with YAP1 to enhance PGR activity. Modulates expression of post-synaptic scaffolding proteins via regulation of ESR1, ESR2 and PGR. This is WW domain-binding protein 2 (Wbp2) from Rattus norvegicus (Rat).